Consider the following 332-residue polypeptide: MTTTERSDPAIRHDWTVAQVQAIHDMPLLDLVHRASLVHRAHHDPSDIQRASLLSIKTGGCPEDCGYCSQSAHHKETGVARQRLMPVEAVLREAAAAKAAGATRFCMGAAWRSPKDGPDFDAVLAMVRGVRGLGMEACVTLGMLTPSQAERLAEAGLTAYNHNLDTGPDYYDKIVSTRSYEDRLATLQAVRDAGIGVCCGGIIGMGEGVTDRVAMLQVLANHAPHPESVPINALAAVPGTPLGERPPVDPFEMVRMCATARIVMPRARVRLSAGRRALSREAQVLCFLAGANSIFYGERLLTTANTDADADAQLLRDIGVPVPAISALEAAE.

In terms of domain architecture, Radical SAM core spans 46 to 275 (SDIQRASLLS…RARVRLSAGR (230 aa)). Residues cysteine 61, cysteine 65, and cysteine 68 each coordinate [4Fe-4S] cluster. Residues cysteine 106, cysteine 138, cysteine 198, and arginine 270 each contribute to the [2Fe-2S] cluster site.

It belongs to the radical SAM superfamily. Biotin synthase family. As to quaternary structure, homodimer. [4Fe-4S] cluster serves as cofactor. It depends on [2Fe-2S] cluster as a cofactor.

The enzyme catalyses (4R,5S)-dethiobiotin + (sulfur carrier)-SH + 2 reduced [2Fe-2S]-[ferredoxin] + 2 S-adenosyl-L-methionine = (sulfur carrier)-H + biotin + 2 5'-deoxyadenosine + 2 L-methionine + 2 oxidized [2Fe-2S]-[ferredoxin]. The protein operates within cofactor biosynthesis; biotin biosynthesis; biotin from 7,8-diaminononanoate: step 2/2. In terms of biological role, catalyzes the conversion of dethiobiotin (DTB) to biotin by the insertion of a sulfur atom into dethiobiotin via a radical-based mechanism. The polypeptide is Biotin synthase (Methylobacterium sp. (strain 4-46)).